A 335-amino-acid chain; its full sequence is Phospho-N-acetylmuramoyl-pentapeptide-transferase (335 aa).

10 consecutive transmembrane segments (helical) span residues 3-23 (LTIL…PHFI), 53-73 (GGTV…LVYF), 78-98 (SLGL…IGFL), 118-138 (FTFQ…PSGI), 143-163 (VFGY…FWVV), 174-194 (GIDG…GVIA), 200-220 (FDVL…FLFN), 226-246 (IFMG…ISIA), 251-271 (WTLL…MLQV), and 314-334 (VDAF…AILY).

The protein belongs to the glycosyltransferase 4 family. MraY subfamily. Requires Mg(2+) as cofactor.

It is found in the cell membrane. The enzyme catalyses UDP-N-acetyl-alpha-D-muramoyl-L-alanyl-gamma-D-glutamyl-L-lysyl-D-alanyl-D-alanine + di-trans,octa-cis-undecaprenyl phosphate = Mur2Ac(oyl-L-Ala-gamma-D-Glu-L-Lys-D-Ala-D-Ala)-di-trans,octa-cis-undecaprenyl diphosphate + UMP. Its pathway is cell wall biogenesis; peptidoglycan biosynthesis. In terms of biological role, catalyzes the initial step of the lipid cycle reactions in the biosynthesis of the cell wall peptidoglycan: transfers peptidoglycan precursor phospho-MurNAc-pentapeptide from UDP-MurNAc-pentapeptide onto the lipid carrier undecaprenyl phosphate, yielding undecaprenyl-pyrophosphoryl-MurNAc-pentapeptide, known as lipid I. The polypeptide is Phospho-N-acetylmuramoyl-pentapeptide-transferase (Streptococcus equi subsp. equi (strain 4047)).